A 349-amino-acid polypeptide reads, in one-letter code: Phenylalanine--tRNA ligase alpha subunit (349 aa).

Glu259 serves as a coordination point for Mg(2+).

Belongs to the class-II aminoacyl-tRNA synthetase family. Phe-tRNA synthetase alpha subunit type 1 subfamily. As to quaternary structure, tetramer of two alpha and two beta subunits. Requires Mg(2+) as cofactor.

The protein resides in the cytoplasm. It catalyses the reaction tRNA(Phe) + L-phenylalanine + ATP = L-phenylalanyl-tRNA(Phe) + AMP + diphosphate + H(+). The polypeptide is Phenylalanine--tRNA ligase alpha subunit (Lactobacillus helveticus (strain DPC 4571)).